A 418-amino-acid polypeptide reads, in one-letter code: MNLTELKKMPVPNLVALAQSMDIEGVGRSRKQDLIFAILKAQAKKGEDIYGDGVLEILSDGFGFLRSADASYLAGPDDIYVSPSQIRRFALRTGDTISGKIRPPKDGERYFALLKVNDINFDRPENAKSKILFENFTPLFAQKRLTLEIGNGSTEDITARTIDLVAPIGKGQRGLIVSPPKAGKTMMLQNIAQSIGHNHPDCYLIVLLIDERPEEVTEMARSVRGEVISSTFDEPATRHVQVAEMVIEKAKRLVEHKRDVVILLDSITRLARAYNTVVPSSGKVLTGGVDANALQRPKRFFGAARNVEEGGSLTILATALVDTGSRMDDVIYEEFKGTGNMEIHMDRRIAEKRIFPAININRSGTRREELLMGQAELQKMWILRKILHPMDELAAMEFLHDKLKATKTNDEFFSSMKG.

The region spanning 48–123 (DIYGDGVLEI…LKVNDINFDR (76 aa)) is the Rho RNA-BD domain. ATP contacts are provided by residues 169-174 (GKGQRG), 181-186 (KAGKTM), and Arg-212.

It belongs to the Rho family. Homohexamer. The homohexamer assembles into an open ring structure.

Facilitates transcription termination by a mechanism that involves Rho binding to the nascent RNA, activation of Rho's RNA-dependent ATPase activity, and release of the mRNA from the DNA template. The polypeptide is Transcription termination factor Rho (Allochromatium vinosum (strain ATCC 17899 / DSM 180 / NBRC 103801 / NCIMB 10441 / D) (Chromatium vinosum)).